Reading from the N-terminus, the 209-residue chain is FAS-associated death domain protein (209 aa).

The DED domain occupies 3–81 (PFLVLLHSVS…RKDLLLRLDD (79 aa)). The Death domain occupies 97–181 (LRAAMEIICD…VVADLIEEDQ (85 aa)). Polar residues predominate over residues 187–200 (QSGSANPGSFTAWD). The interval 187–209 (QSGSANPGSFTAWDSGSAAPGAS) is disordered.

Can self-associate. Component of the AIM2 PANoptosome complex, a multiprotein complex that drives inflammatory cell death (PANoptosis). Component of the death-induced signaling complex (DISC) composed of cell surface receptor FAS/CD95 or TNFRSF1A, adapter protein FADD and the CASP8 protease; recruitment of CASP8 to the complex is required for processing of CASP8 into the p18 and p10 subunits. Interacts (via death domain) with FAS (via death domain). Interacts directly (via DED domain) with NOL3 (via CARD domain); inhibits death-inducing signaling complex (DISC) assembly by inhibiting the increase in FAS-FADD binding induced by FAS activation. Interacts with CFLAR, PEA15 and MBD4. When phosphorylated, part of a complex containing HIPK3 and FAS. May interact with MAVS/IPS1. Interacts with MOCV v-CFLAR protein and PIDD1. Interacts with RIPK1 and TRADD. Interacts with stimulated TNFRSF10B. Interacts with DDX24. Post-translationally, phosphorylated.

The protein localises to the cytoplasm. Its function is as follows. Apoptotic adapter molecule that recruits caspases CASP8 or CASP10 to the activated FAS/CD95 or TNFRSF1A/TNFR-1 receptors. The resulting aggregate called the death-inducing signaling complex (DISC) performs CASP8 proteolytic activation. Active CASP8 initiates the subsequent cascade of caspases mediating apoptosis. Involved in interferon-mediated antiviral immune response, playing a role in the positive regulation of interferon signaling. The polypeptide is FAS-associated death domain protein (Bos taurus (Bovine)).